The chain runs to 312 residues: Zinc transporter ZitB (312 aa).

5 consecutive transmembrane segments (helical) span residues 21 to 41, 48 to 68, 90 to 110, 123 to 143, and 164 to 184; these read LLFA…GGIL, LADA…LLAV, AAFV…WEAI, LMMV…WILH, and LLGS…GWTP.

It belongs to the cation diffusion facilitator (CDF) transporter (TC 2.A.4) family. SLC30A subfamily.

The protein resides in the cell inner membrane. In terms of biological role, involved in zinc efflux across the cytoplasmic membrane, thus reducing zinc accumulation in the cytoplasm and rendering bacteria more resistant to zinc. It may contribute to zinc homeostasis at low concentrations of zinc. In Salmonella typhimurium (strain LT2 / SGSC1412 / ATCC 700720), this protein is Zinc transporter ZitB.